A 288-amino-acid polypeptide reads, in one-letter code: 33 kDa chaperonin (288 aa).

2 disulfide bridges follow: Cys233–Cys235 and Cys267–Cys270.

This sequence belongs to the HSP33 family. In terms of processing, under oxidizing conditions two disulfide bonds are formed involving the reactive cysteines. Under reducing conditions zinc is bound to the reactive cysteines and the protein is inactive.

It is found in the cytoplasm. Redox regulated molecular chaperone. Protects both thermally unfolding and oxidatively damaged proteins from irreversible aggregation. Plays an important role in the bacterial defense system toward oxidative stress. This is 33 kDa chaperonin from Actinobacillus succinogenes (strain ATCC 55618 / DSM 22257 / CCUG 43843 / 130Z).